Here is a 182-residue protein sequence, read N- to C-terminus: Functional amyloid subunit FapB (182 aa).

Positions M1–A18 are cleaved as a signal peptide. Residues N22 to G58 form a FapB_R1 repeat. The stretch at S80–S114 is one FapB_R2 repeat. The stretch at S150–T180 is one FapB_R3 repeat.

The protein belongs to the FapB/FapC family. In terms of assembly, forms fibrils in vitro; in the presence of FapA the fibrils are slightly narrower. A minor component of purified amyloid fibrils. Fibrils are resistant to boiling in 2% (weight/vol) SDS and require &gt;90% (vol/vol) formic acid to dissolve.

It is found in the fimbrium. The protein resides in the secreted. Its function is as follows. A minor component of the functional amyloid in this bacterium. Probably nucleates fibril formation; FapB nucleates fibrillation its own, FapA inhibits FapB fibril elongation. Upon overexpression of the endogenous six-gene locus (fapA-fapF) in situ, cells form large clumps during liquid growth, make large amounts of biofilm and produce amyloid fibrils. Expression of the 6 gene operon in E.coli strain BL21(DE3) induces flocculation and biofilm formation with copious extracellular fibrils. The chain is Functional amyloid subunit FapB from Pseudomonas fluorescens.